Consider the following 909-residue polypeptide: MTKKNFNDEENESLLETYNKQQQKQSISTTNRSDQKFGINNANKQFSLNNKKSINGEEIDEEELIEDTIFFKFKLDSKQRNSIKLFIQIVSLVILAGYLISINALYFSTNARSIIFYPSINSNTTDSGSVSPTSTPSPTPTPTPSPTSLLLQTLTSTTTSYDSSEIEALNGGTFNMKYFFYFSTFDILLISYFISLFWLLLIFSDSFIYHTISYIITIIALIYNVIKSYFTITQILSINNNIITTSSSSNEIYNGSDSYLPNESPLFDSLKVREIIIVIVLVGIPLMVLFLVLHIITLQLSFKKYKRLSDKEKQFYNQSNEEKRLNKKVEVKHSNLKRLIQLSRPELPIILAAMVALVFSSLTSLAMPYFFGSIVQVVATTHSFNNLNSSTLALVVIFVIGSISTLVRSWLFYLAGQKFVARIRRNLFSSIVNQEIGYFDQCRTGELLSRLSSDSQVIQNSVTVNISMLFRYTIQIIGSVILLFITNWRLTLLMLGIVPVLAISTVVYGKKIKQLGKQFQDELAKSSTTGEEVISNIRTVRSFSKEQKFIDLYSKDINGSYLIGKSLAVATGVFSGIVFLVAQLAIVLIVYVGARQVLDGTLSTGDLTSFLLYTLSLAMSLAFISSLMTDFLKAIGSSDRIFEIFDRVPAINVSGGKQIQNPLGEIELKDVEFSYPTRPNNSVLKGLNLKLSKGTITALVGPSGGGKSTVIAMIERFYDPNSGSITFDGIDIKELDPVWYRGIIGYVSQEPVLFAGSIKDNITFGNDSATMDQIISAAEKANAHSFIEEFENGYDTIVGERGVRLSGGQKQRVAIARAMIQNPMILLLDEATSALDAESEYLVKQAIDEIMKDRTVIVIAHRLSTVINANTVVVINQGKIEEMGTHKELLNNTDGIYHNLVKRQLSSDD.

A disordered region spans residues 1 to 36 (MTKKNFNDEENESLLETYNKQQQKQSISTTNRSDQK). The segment covering 14 to 36 (LLETYNKQQQKQSISTTNRSDQK) has biased composition (polar residues). Residues 85–105 (LFIQIVSLVILAGYLISINAL) traverse the membrane as a helical segment. A compositionally biased stretch (low complexity) spans 125 to 134 (TDSGSVSPTS). The segment at 125–147 (TDSGSVSPTSTPSPTPTPTPSPT) is disordered. Residues 135 to 145 (TPSPTPTPTPS) are compositionally biased toward pro residues. Helical transmembrane passes span 182–202 (FSTF…LLLI), 206–226 (SFIY…YNVI), 275–295 (IIIV…VLHI), 347–367 (LPII…SLAM), 392–412 (LALV…SWLF), 480–500 (VILL…IVPV), 572–592 (GVFS…IVYV), and 607–627 (LTSF…ISSL). The region spanning 350 to 633 (ILAAMVALVF…ISSLMTDFLK (284 aa)) is the ABC transmembrane type-1 domain. The ABC transporter domain occupies 666 to 902 (IELKDVEFSY…TDGIYHNLVK (237 aa)). Residue 701–708 (GPSGGGKS) coordinates ATP.

This sequence belongs to the ABC transporter superfamily. ABCB family.

Its subcellular location is the membrane. The chain is ABC transporter B family member 1 (abcB1) from Dictyostelium discoideum (Social amoeba).